The chain runs to 40 residues: Conotoxin Bt14.16 (40 aa).

The propeptide occupies 1–18 (SDGRDAAVIYTESDVIAR). 2 disulfide bridges follow: cysteine 21–cysteine 36 and cysteine 24–cysteine 29.

It belongs to the conotoxin A superfamily. As to expression, expressed by the venom duct.

The protein resides in the secreted. Its function is as follows. Probable neurotoxin with unknown target. Possibly targets ion channels. This chain is Conotoxin Bt14.16, found in Conus betulinus (Beech cone).